A 229-amino-acid chain; its full sequence is MKRKNIALIPAAGIGVRFGADKPKQYVEIGSKTVLEHVLGIFERHEAVDLTVVVVSPEDTFADKVQTAFPQVRVWKNGGQTRAETVRNGVAKLLETGLAAETDNILVHDAARCCLPSEALARLIEQAGNAAEGGILAVPVADTLKRAESGQISATVDRSGLWQAQTPQLFQAGLLHRALAAENLGGITDEASAVEKLGVRPLLIQGDARNLKLTQPQDAYIVRLLLNAV.

The protein belongs to the IspD/TarI cytidylyltransferase family. IspD subfamily.

It carries out the reaction 2-C-methyl-D-erythritol 4-phosphate + CTP + H(+) = 4-CDP-2-C-methyl-D-erythritol + diphosphate. Its pathway is isoprenoid biosynthesis; isopentenyl diphosphate biosynthesis via DXP pathway; isopentenyl diphosphate from 1-deoxy-D-xylulose 5-phosphate: step 2/6. In terms of biological role, catalyzes the formation of 4-diphosphocytidyl-2-C-methyl-D-erythritol from CTP and 2-C-methyl-D-erythritol 4-phosphate (MEP). This chain is 2-C-methyl-D-erythritol 4-phosphate cytidylyltransferase, found in Neisseria gonorrhoeae (strain ATCC 700825 / FA 1090).